The following is a 1414-amino-acid chain: MVHATACSEIIRAEVAELLGVRADALHPGANLVGQGLDSIRMMSLVGRWRRKGIAVDFATLAATPTIEAWSQLVSAGTGVAPTAVAAPGDAGLSQEGEPFPVAPMQHAMWVGRHDHQQLGGVAGHLYVEFDGARVDPDRLRAAATRLALRHPMLRVQFLPDGTQRIPPAAGSRDFPISVADLRHVAPDVVDQRLAGIRDAKSHQQLDGAVFELALTLLPGERTRLHVDLDMQAADAMSYRILLADLAALYDGREPPALGYTYREYRQAIEAEETLPQPVRDADRDWWAQRIPQLPDPPALPTRAGGERDRRRSTRRWHWLDPQTRDALFARARARGITPAMTLAAAFANVLARWSASSRFLLNLPLFSRQALHPDVDLLVGDFTSSLLLDVDLTGARTAAARAQAVQEALRTAAGHSAYPGLSVLRDLSRHRGTQVLAPVVFTSALGLGDLFCPDVTEQFGTPGWIISQGPQVLLDAQVTEFDGGVLVNWDVREGVFAPGVIDAMFTHQVDELLRLAAGDDAWDAPSPSALPAAQRAVRAALNGRTAAPSTEALHDGFFRQAQQQPDAPAVFASSGDLSYAQLRDQASAVAAALRAAGLRVGDTVAVLGPKTGEQVAAVLGILAAGGVYLPIGVDQPRDRAERILATGSVNLALVCGPPCQVRVPVPTLLLADVLAAAPAEFVPGPSDPTALAYVLFTSGSTGEPKGVEVAHDAAMNTVETFIRHFELGAADRWLALATLECDMSVLDIFAALRSGGAIVVVDEAQRRDPDAWARLIDTYEVTALNFMPGWLDMLLEVGGGRLSSLRAVAVGGDWVRPDLARRLQVQAPSARFAGLGGATETAVHATIFEVQDAANLPPDWASVPYGVPFPNNACRVVADSGDDCPDWVAGELWVSGRGIARGYRGRPELTAERFVEHDGRTWYRTGDLARYWHDGTLEFVGRADHRVKISGYRVELGEIEAALQRLPGVHAAAATVLPGGSDVLAAAVCVDDAGVTAESIRQQLADLVPAHMIPRHVTLLDRIPFTDSGKIDRAEVGALLAAEVERSGDRSAPYAAPRTVLQRALRRIVADILGRANDAVGVHDDFFALGGDSVLATQVVAGIRRWLDSPSLMVADMFAARTIAALAQLLTGREANADRLELVAEVYLEIANMTSADVMAALDPIEQPAQPAFKPWVKRFTGTDKPGAVLVFPHAGGAAAAYRWLAKSLVANDVDTFVVQYPQRADRRSHPAADSIEALALELFEAGDWHLTAPLTLFGHCMGAIVAFEFARLAERNGVPVRALWASSGQAPSTVAASGPLPTADRDVLADMVDLGGTDPVLLEDEEFVELLVPAVKADYRALSGYSCPPDVRIRANIHAVGGNRDHRISREMLTSWETHTSGRFTLSHFDGGHFYLNDHLDAVARMVSADVR.

The Carrier 1 domain maps to 5-78; sequence TACSEIIRAE…AWSQLVSAGT (74 aa). At serine 39 the chain carries O-(pantetheine 4'-phosphoryl)serine. The interval 96 to 394 is condensation/cyclization; that stretch reads EGEPFPVAPM…SSLLLDVDLT (299 aa). An adenylation region spans residues 579 to 975; that stretch reads SYAQLRDQAS…RLPGVHAAAA (397 aa). The 79-residue stretch at 1057–1135 folds into the Carrier 2 domain; it reads APRTVLQRAL…ALAQLLTGRE (79 aa). At serine 1094 the chain carries O-(pantetheine 4'-phosphoryl)serine. The segment at 1188–1413 is thioesterase; the sequence is GAVLVFPHAG…AVARMVSADV (226 aa).

Belongs to the ATP-dependent AMP-binding enzyme family. MbtB subfamily. It depends on pantetheine 4'-phosphate as a cofactor. 4'-phosphopantetheine is transferred from CoA to a specific serine in each of the two carrier protein domains, leading to their activation from apo to holo forms.

It participates in siderophore biosynthesis; mycobactin biosynthesis. Its function is as follows. Involved in the initial steps of the mycobactin biosynthetic pathway. Putatively couples activated salicylic acid with serine or threonine and cyclizes this precursor to the hydroxyphenyloxazoline ring system present in this class of siderophores. Essential for growth in macrophages. The polypeptide is Phenyloxazoline synthase MbtB (mbtB) (Mycobacterium tuberculosis (strain CDC 1551 / Oshkosh)).